The primary structure comprises 146 residues: Large ribosomal subunit protein uL15 (146 aa).

Positions 1-13 are enriched in basic and acidic residues; sequence MKLHELKPAEGSR. The tract at residues 1–59 is disordered; the sequence is MKLHELKPAEGSRKVRNRVGRGTSSGNGKTSGRGQKGQKARSGGGVRLGFEGGQTPLFR. Gly residues-rich tracts occupy residues 23 to 35 and 42 to 52; these read TSSG…GRGQ and SGGGVRLGFEG.

The protein belongs to the universal ribosomal protein uL15 family. In terms of assembly, part of the 50S ribosomal subunit.

Its function is as follows. Binds to the 23S rRNA. In Streptococcus agalactiae serotype Ia (strain ATCC 27591 / A909 / CDC SS700), this protein is Large ribosomal subunit protein uL15.